The chain runs to 1408 residues: ABC multidrug transporter MDR1 (1408 aa).

The segment covering 79–88 has biased composition (polar residues); that stretch reads IAASSDTLRN. A disordered region spans residues 79–102; that stretch reads IAASSDTLRNSPLEKPISNAFSKS. 2 consecutive transmembrane segments (helical) span residues 147–167 and 223–243; these read FAAPLEIIAMVLGLVLAVAAG and LYLMAIGIGMFLATWLYMFIW. The region spanning 157–464 is the ABC transmembrane type-1 1 domain; it reads VLGLVLAVAA…LAPELAAVTK (308 aa). An N-linked (GlcNAc...) asparagine glycan is attached at Asn-244. 4 consecutive transmembrane segments (helical) span residues 296-316, 321-341, 408-428, and 436-456; these read KVALVFQYAGTFVCGFVLAFV, LAGALVSILPVIMLCGGIMMT, IMFFVIYAAYALAFFYGGILV, and GIVINVFMSILIGSFSMAMLA. An ABC transporter 1 domain is found at 499–744; sequence ISFENVKFHY…ENGPYAQLVN (246 aa). 534–541 provides a ligand contact to ATP; that stretch reads GASGSGKS. Asn-606 carries an N-linked (GlcNAc...) asparagine glycan. Helical transmembrane passes span 838-858 and 882-902; these read IIAFIAAICAGMVYPSLAILF and LWYFITALAAAFVIFFQSAGF. The ABC transmembrane type-1 2 domain maps to 838 to 1125; that stretch reads IIAFIAAICA…VFTFVPDASK (288 aa). An N-linked (GlcNAc...) asparagine glycan is attached at Asn-934. The next 4 membrane-spanning stretches (helical) occupy residues 952 to 972, 981 to 999, 1072 to 1092, and 1099 to 1119; these read GLFGPTLGTVVQSCATLIGGC, LLALIGIACIPILVSGGYI, GLTFCIIALVFYIGALWIIDA, and FYTVLNSIVFASIQAGNVFTF. Residues Asn-1127 and Asn-1182 are each glycosylated (N-linked (GlcNAc...) asparagine). The ABC transporter 2 domain occupies 1162 to 1402; sequence VRIEGVHFRY…KGGYYELVQM (241 aa). 1197–1204 lines the ATP pocket; the sequence is GPSGCGKS. Asn-1404 is a glycosylation site (N-linked (GlcNAc...) asparagine).

Belongs to the ABC transporter superfamily. ABCB family. Multidrug resistance exporter (TC 3.A.1.201) subfamily.

It localises to the cell membrane. It catalyses the reaction itraconazole(in) + ATP + H2O = itraconazole(out) + ADP + phosphate + H(+). The catalysed reaction is voriconazole(in) + ATP + H2O = voriconazole(out) + ADP + phosphate + H(+). It carries out the reaction fluconazole(in) + ATP + H2O = fluconazole(out) + ADP + phosphate + H(+). Pleiotropic ABC efflux transporter that confers resistance to structurally and functionally unrelated compounds including azoles such as fluconazole (FLC), itraconazole (ITC), posaconazole (POS), and voriconazole (VRC). The sequence is that of ABC multidrug transporter MDR1 from Cryptococcus neoformans var. grubii serotype A (strain H99 / ATCC 208821 / CBS 10515 / FGSC 9487) (Filobasidiella neoformans var. grubii).